A 446-amino-acid chain; its full sequence is Tetratricopeptide repeat protein 23 (446 aa).

TPR repeat units follow at residues 45–78, 137–170, 186–219, 310–347, and 356–389; these read LRLS…TRIC, VELF…SKEM, ARIK…TEIS, TAKF…KVAV, and AETY…QTLL. Residues 410 to 446 form a disordered region; it reads APEVPARPRPSPGAKAAFCAGGRPYSVPGRTRPSAAD.

Associated with the EvC complex composed of EFCAB7, IQCE, EVC2 and EVC.

It is found in the cell projection. Its subcellular location is the cilium. Its function is as follows. Participates positively in the ciliary Hedgehog (Hh) signaling. The sequence is that of Tetratricopeptide repeat protein 23 (TTC23) from Bos taurus (Bovine).